The primary structure comprises 1104 residues: Isoleucine--tRNA ligase (1104 aa).

The short motif at 48–58 (PYTTGRIHLGT) is the 'HIGH' region element. The 'KMSKS' region signature appears at 644 to 648 (KMSKS). Residue lysine 647 coordinates ATP.

It belongs to the class-I aminoacyl-tRNA synthetase family. IleS type 2 subfamily. Monomer. Requires Zn(2+) as cofactor.

The protein localises to the cytoplasm. The enzyme catalyses tRNA(Ile) + L-isoleucine + ATP = L-isoleucyl-tRNA(Ile) + AMP + diphosphate. Functionally, catalyzes the attachment of isoleucine to tRNA(Ile). As IleRS can inadvertently accommodate and process structurally similar amino acids such as valine, to avoid such errors it has two additional distinct tRNA(Ile)-dependent editing activities. One activity is designated as 'pretransfer' editing and involves the hydrolysis of activated Val-AMP. The other activity is designated 'posttransfer' editing and involves deacylation of mischarged Val-tRNA(Ile). In Methanocella arvoryzae (strain DSM 22066 / NBRC 105507 / MRE50), this protein is Isoleucine--tRNA ligase.